The primary structure comprises 141 residues: Galactose-6-phosphate isomerase subunit LacA 1 (141 aa).

Belongs to the LacAB/RpiB family. As to quaternary structure, heteromultimeric protein consisting of LacA and LacB.

The catalysed reaction is aldehydo-D-galactose 6-phosphate = keto-D-tagatose 6-phosphate. It participates in carbohydrate metabolism; D-galactose 6-phosphate degradation; D-tagatose 6-phosphate from D-galactose 6-phosphate: step 1/1. The protein is Galactose-6-phosphate isomerase subunit LacA 1 of Streptococcus pyogenes serotype M18 (strain MGAS8232).